Reading from the N-terminus, the 177-residue chain is Thaumatin-like protein (177 aa).

The N-terminal stretch at Met-1–Ala-26 is a signal peptide.

The protein belongs to the thaumatin family.

Its subcellular location is the secreted. This Oryza sativa subsp. japonica (Rice) protein is Thaumatin-like protein.